Consider the following 613-residue polypeptide: Probable LRR receptor-like serine/threonine-protein kinase At5g10290 (613 aa).

A signal peptide spans methionine 1–glycine 31. The Extracellular segment spans residues aspartate 32–glycine 225. 2 N-linked (GlcNAc...) asparagine glycosylation sites follow: asparagine 81 and asparagine 116. 4 LRR repeats span residues asparagine 95–leucine 117, serine 119–leucine 141, lysine 143–proline 166, and asparagine 167–isoleucine 189. Asparagine 155 carries an N-linked (GlcNAc...) asparagine glycan. A glycan (N-linked (GlcNAc...) asparagine) is linked at asparagine 193. Residues isoleucine 226–phenylalanine 246 traverse the membrane as a helical segment. Residues cysteine 247 to arginine 613 are Cytoplasmic-facing. At threonine 287 the chain carries Phosphothreonine. One can recognise a Protein kinase domain in the interval phenylalanine 290–leucine 569. Leucine 296–valine 304 is an ATP binding site. Threonine 313 bears the Phosphothreonine mark. Lysine 318 lines the ATP pocket. Serine 371 is modified (phosphoserine). The residue at position 390 (threonine 390) is a Phosphothreonine. The active-site Proton acceptor is the aspartate 417. 3 positions are modified to phosphothreonine: threonine 450, threonine 451, and threonine 456. Tyrosine 464 is subject to Phosphotyrosine. Phosphoserine is present on serine 466. A Phosphothreonine modification is found at threonine 467. Serine 471 is subject to Phosphoserine. Threonine 547 carries the phosphothreonine modification.

Belongs to the protein kinase superfamily. Ser/Thr protein kinase family.

The protein localises to the cell membrane. It catalyses the reaction L-seryl-[protein] + ATP = O-phospho-L-seryl-[protein] + ADP + H(+). The catalysed reaction is L-threonyl-[protein] + ATP = O-phospho-L-threonyl-[protein] + ADP + H(+). The polypeptide is Probable LRR receptor-like serine/threonine-protein kinase At5g10290 (Arabidopsis thaliana (Mouse-ear cress)).